The following is a 118-amino-acid chain: UPF0342 protein BCE_0953 (118 aa).

Belongs to the UPF0342 family.

This is UPF0342 protein BCE_0953 from Bacillus cereus (strain ATCC 10987 / NRS 248).